A 95-amino-acid polypeptide reads, in one-letter code: MIWLAVYDIEDDGERAKASAILQAWGFVRVQRSFYVGRMPRGKAADLLKILQRHVKSGHIALIPITDELLAKALELGRPPYAPLKPPKYAQIYVV.

Mg(2+) is bound at residue Asp-8.

Belongs to the CRISPR-associated endoribonuclease Cas2 protein family. As to quaternary structure, homodimer, forms a heterotetramer with a Cas1 homodimer. Mg(2+) serves as cofactor.

In terms of biological role, CRISPR (clustered regularly interspaced short palindromic repeat), is an adaptive immune system that provides protection against mobile genetic elements (viruses, transposable elements and conjugative plasmids). CRISPR clusters contain sequences complementary to antecedent mobile elements and target invading nucleic acids. CRISPR clusters are transcribed and processed into CRISPR RNA (crRNA). Functions as a ssRNA-specific endoribonuclease. Involved in the integration of spacer DNA into the CRISPR cassette. In Pyrobaculum aerophilum (strain ATCC 51768 / DSM 7523 / JCM 9630 / CIP 104966 / NBRC 100827 / IM2), this protein is CRISPR-associated endoribonuclease Cas2 1.